A 301-amino-acid polypeptide reads, in one-letter code: GTPase Era (301 aa).

The Era-type G domain occupies 6–173 (KSGFVAIVGR…LEQTNANLEI (168 aa)). The tract at residues 14 to 21 (GRPNVGKS) is G1. 14–21 (GRPNVGKS) serves as a coordination point for GTP. A G2 region spans residues 40–44 (QTTRN). Positions 61–64 (DTPG) are G3. Residues 61 to 65 (DTPGI) and 123 to 126 (NKID) each bind GTP. Positions 123-126 (NKID) are G4. Residues 152 to 154 (ISA) form a G5 region. The 79-residue stretch at 204-282 (TREEVPHSVA…FLEIWVKVQK (79 aa)) folds into the KH type-2 domain.

This sequence belongs to the TRAFAC class TrmE-Era-EngA-EngB-Septin-like GTPase superfamily. Era GTPase family. As to quaternary structure, monomer.

It localises to the cytoplasm. The protein resides in the cell membrane. In terms of biological role, an essential GTPase that binds both GDP and GTP, with rapid nucleotide exchange. Plays a role in 16S rRNA processing and 30S ribosomal subunit biogenesis and possibly also in cell cycle regulation and energy metabolism. The sequence is that of GTPase Era from Listeria innocua serovar 6a (strain ATCC BAA-680 / CLIP 11262).